Consider the following 523-residue polypeptide: Uridylate cyclase (523 aa).

2 consecutive Guanylate cyclase domains span residues 69–209 and 318–438; these read VHVY…AKLA and MSIF…IGIR. Residues tyrosine 72 and arginine 125 each coordinate a ribonucleoside 5'-triphosphate. Positions 323, 324, and 372 each coordinate Mn(2+).

It belongs to the adenylyl cyclase class-4/guanylyl cyclase family. Pyrimidine cyclase subfamily. In terms of assembly, monomer. It depends on Mn(2+) as a cofactor.

The protein localises to the cytoplasm. The enzyme catalyses UTP = 3',5'-cyclic UMP + diphosphate. Pycsar (pyrimidine cyclase system for antiphage resistance) provides immunity against bacteriophage. The pyrimidine cyclase (PycC) synthesizes cyclic nucleotides in response to infection; these serve as specific second messenger signals. The signals activate the nearby effector, leading to bacterial cell death and abortive phage infection. A clade A Pycsar system. In terms of biological role, the pyrimidine cyclase gene of a two-gene Pycsar system, generates cyclic UMP (cUMP) from UTP, has little to no activity on ATP, CTP or GTP. Expression of this and effector RsPycTM (AC A0A4R2UGS4) probably confers resistance to some bacteriophage. The genes are probably only expressed in response to bacteriophage infection. This is Uridylate cyclase from Rhizobium sp. (strain PP-F2F-G36).